Reading from the N-terminus, the 207-residue chain is Histidine biosynthesis bifunctional protein HisIE (207 aa).

The phosphoribosyl-AMP cyclohydrolase stretch occupies residues 1-117 (MSLVTTINWE…GKQEQPALVF (117 aa)). The phosphoribosyl-ATP pyrophosphohydrolase stretch occupies residues 118-207 (LHQLEQVLAN…TEKLQERHNK (90 aa)).

In the N-terminal section; belongs to the PRA-CH family. This sequence in the C-terminal section; belongs to the PRA-PH family.

Its subcellular location is the cytoplasm. The catalysed reaction is 1-(5-phospho-beta-D-ribosyl)-ATP + H2O = 1-(5-phospho-beta-D-ribosyl)-5'-AMP + diphosphate + H(+). It catalyses the reaction 1-(5-phospho-beta-D-ribosyl)-5'-AMP + H2O = 1-(5-phospho-beta-D-ribosyl)-5-[(5-phospho-beta-D-ribosylamino)methylideneamino]imidazole-4-carboxamide. It participates in amino-acid biosynthesis; L-histidine biosynthesis; L-histidine from 5-phospho-alpha-D-ribose 1-diphosphate: step 2/9. It functions in the pathway amino-acid biosynthesis; L-histidine biosynthesis; L-histidine from 5-phospho-alpha-D-ribose 1-diphosphate: step 3/9. In Photobacterium profundum (strain SS9), this protein is Histidine biosynthesis bifunctional protein HisIE.